The primary structure comprises 94 residues: Putative pterin-4-alpha-carbinolamine dehydratase (94 aa).

It belongs to the pterin-4-alpha-carbinolamine dehydratase family.

The enzyme catalyses (4aS,6R)-4a-hydroxy-L-erythro-5,6,7,8-tetrahydrobiopterin = (6R)-L-erythro-6,7-dihydrobiopterin + H2O. This chain is Putative pterin-4-alpha-carbinolamine dehydratase, found in Mycobacterium avium (strain 104).